A 620-amino-acid chain; its full sequence is Protein NRT1/ PTR FAMILY 2.13 (620 aa).

Positions 1–32 (MVLEDRKDGSSLPGRSGSFSKSSPSELDVVDP) are disordered. Residues 10–25 (SSLPGRSGSFSKSSPS) are compositionally biased toward low complexity. 12 helical membrane passes run 70–90 (LGSIGLLANFMVYLTKVFHLE), 95–115 (ANVINIWSGFTNLTPLVGAYI), 126–146 (IAFASFATLLGLITITLTASF), 167–187 (KLQIGVLLLGLCFLSVGSGGI), 213–233 (FFNWYYMTFTVVLIITQTVVV), 241–261 (WIIGFSIPTGLMALAVVMFFA), 364–384 (IVPIWSAGIISLAAMTTQGTF), 402–422 (IPAGSLSVISLLTIGIFLPFY), 443–463 (LQRIGTGIVFAIFSMIVAGIV), 485–505 (VFWLSPQLILMGLCEAFNIIG), 524–544 (SLFSLSFAGSSYLSSFLVTVV), and 568–588 (YFYYLIAVLGVVNLVYFWYCA).

The protein belongs to the major facilitator superfamily. Proton-dependent oligopeptide transporter (POT/PTR) (TC 2.A.17) family. As to quaternary structure, interacts with NLA. Ubiquitinated by NLA. Ubiquitination of NPF2.13 leads to its degradation by the proteasome. In terms of tissue distribution, expressed in leaves and flowers. Detected in stems and siliques. Highest expression in the distal lamina of older leaves. Restricted to the sieve element and companion cell complex of the minor vein.

Its subcellular location is the cell membrane. Functionally, low-affinity proton-dependent nitrate transporter. Not involved in dipeptides transport, but has a weak glucosinolate transport activity. Involved in phloem loading and nitrate remobilization from the older leaves to other tissues. The sequence is that of Protein NRT1/ PTR FAMILY 2.13 (NPF2.13) from Arabidopsis thaliana (Mouse-ear cress).